The primary structure comprises 264 residues: Thiazole synthase (264 aa).

Lys-106 serves as the catalytic Schiff-base intermediate with DXP. Residues Gly-167, 193-194, and 215-216 contribute to the 1-deoxy-D-xylulose 5-phosphate site; these read AG and NT.

It belongs to the ThiG family. In terms of assembly, homotetramer. Forms heterodimers with either ThiH or ThiS.

The protein resides in the cytoplasm. It carries out the reaction [ThiS sulfur-carrier protein]-C-terminal-Gly-aminoethanethioate + 2-iminoacetate + 1-deoxy-D-xylulose 5-phosphate = [ThiS sulfur-carrier protein]-C-terminal Gly-Gly + 2-[(2R,5Z)-2-carboxy-4-methylthiazol-5(2H)-ylidene]ethyl phosphate + 2 H2O + H(+). It participates in cofactor biosynthesis; thiamine diphosphate biosynthesis. Functionally, catalyzes the rearrangement of 1-deoxy-D-xylulose 5-phosphate (DXP) to produce the thiazole phosphate moiety of thiamine. Sulfur is provided by the thiocarboxylate moiety of the carrier protein ThiS. In vitro, sulfur can be provided by H(2)S. The sequence is that of Thiazole synthase from Xanthomonas axonopodis pv. citri (strain 306).